The sequence spans 419 residues: Probable pectate lyase C (419 aa).

The signal sequence occupies residues 1–19 (MRLGIALFSLIGLCHSVSA). N-linked (GlcNAc...) asparagine glycosylation is found at asparagine 48, asparagine 164, and asparagine 201. Arginine 204 is a catalytic residue. One can recognise an EF-hand domain in the interval 261–296 (NEYFHGYVETNYYDPDRDGTLNGNELGVSASNYGGM). Residues aspartate 274, aspartate 276, aspartate 278, threonine 280, and glutamate 285 each contribute to the Ca(2+) site. The disordered stretch occupies residues 350-395 (ELISDEASMGGPGDLDGGSPPTDSDGDGIPDDAETEIGSDPNTADS). The segment covering 373–386 (SDGDGIPDDAETEI) has biased composition (acidic residues).

It belongs to the polysaccharide lyase 1 family. It depends on Ca(2+) as a cofactor.

It localises to the secreted. It catalyses the reaction Eliminative cleavage of (1-&gt;4)-alpha-D-galacturonan to give oligosaccharides with 4-deoxy-alpha-D-galact-4-enuronosyl groups at their non-reducing ends.. Functionally, pectinolytic enzyme consist of four classes of enzymes: pectin lyase, polygalacturonase, pectin methylesterase and rhamnogalacturonase. Among pectinolytic enzymes, pectin lyase is the most important in depolymerization of pectin, since it cleaves internal glycosidic bonds of highly methylated pectins. Favors pectate, the anion, over pectin, the methyl ester. In Aspergillus terreus (strain NIH 2624 / FGSC A1156), this protein is Probable pectate lyase C (plyC).